We begin with the raw amino-acid sequence, 862 residues long: Protein PRQFV-amide (862 aa).

Positions 1–20 are cleaved as a signal peptide; that stretch reads MSSQLLICSVFVLFTFGPNS. A propeptide spanning residues 21-79 is cleaved from the precursor; that stretch reads FPSCLAQEQAGNSDATQLSADAKAPESAKDKSGDVQNDGTKSVRSKRDLEIDFGSGDVQ. Positions 32-68 are disordered; that stretch reads NSDATQLSADAKAPESAKDKSGDVQNDGTKSVRSKRD. Basic and acidic residues predominate over residues 43-53; the sequence is KAPESAKDKSG. At V86 the chain carries Valine amide. Residues 90-149 constitute a propeptide that is removed on maturation; sequence AAPPVFQTPLVQDKISGFIPSETESPVIGEFAFPGSVFMDDEEALGAEEEPMDDEDLEFY. A Valine amide modification is found at V156. Positions 160–175 are excised as a propeptide; the sequence is GIDDYLLQEKLKDFIE. 9 positions are modified to valine amide: V182, V190, V198, V206, V214, V222, V230, V238, and V246. Positions 250-259 are excised as a propeptide; sequence EADPSFLFED. Position 266 is a valine amide (V266). A propeptide spanning residues 270-300 is cleaved from the precursor; sequence SLDFLGGANWYNPYDVTMEPQSEGSDLQGFS. V307 bears the Valine amide mark. Positions 311–319 are excised as a propeptide; the sequence is DAFDMFEFS. V326 carries the post-translational modification Valine amide. A propeptide spanning residues 330–338 is cleaved from the precursor; the sequence is DQDEMFDFS. V345 carries the post-translational modification Valine amide. Positions 349–357 are excised as a propeptide; sequence DLQEFFDLS. At V364 the chain carries Valine amide. The propeptide occupies 368–376; sequence EFDDEIDFS. Valine amide is present on V383. The propeptide occupies 387-395; that stretch reads ENDDDFDLS. V402 bears the Valine amide mark. A propeptide spanning residues 406–414 is cleaved from the precursor; the sequence is ENDDEFDLS. V421 is modified (valine amide). Basic and acidic residues predominate over residues 424–434; that stretch reads RENDDELEFSK. The segment at 424-528 is disordered; the sequence is RENDDELEFS…NNDDLDFSKR (105 aa). Positions 425–433 are excised as a propeptide; the sequence is ENDDELEFS. Position 440 is a valine amide (V440). A compositionally biased stretch (basic and acidic residues) spans 441–452; that stretch reads GKREDDEIDFSK. Residues 444 to 451 constitute a propeptide that is removed on maturation; that stretch reads EDDEIDFS. V458 bears the Valine amide mark. Residues 459–471 are compositionally biased toward basic and acidic residues; it reads GKRENDGEIDFSK. Positions 462 to 470 are excised as a propeptide; that stretch reads ENDGEIDFS. V477 carries the post-translational modification Valine amide. Residues 478-490 show a composition bias toward basic and acidic residues; sequence GKRENDDEIDFSK. Positions 481 to 489 are excised as a propeptide; sequence ENDDEIDFS. Valine amide is present on V496. Residues 497–508 are compositionally biased toward basic and acidic residues; sequence GKREDGEIDFSK. A propeptide spanning residues 500–507 is cleaved from the precursor; sequence EDGEIDFS. V514 is subject to Valine amide. Over residues 515–527 the composition is skewed to basic and acidic residues; sequence GKRENNDDLDFSK. Positions 518 to 526 are excised as a propeptide; the sequence is ENNDDLDFS. The residue at position 533 (V533) is a Valine amide. A propeptide spanning residues 537-545 is cleaved from the precursor; that stretch reads EVDDEIDFS. The segment at 549 to 634 is disordered; that stretch reads RQFVGKREND…RQFVGKREND (86 aa). At V552 the chain carries Valine amide. Basic and acidic residues predominate over residues 553 to 565; sequence GKRENDDDLDFSK. A propeptide spanning residues 556-564 is cleaved from the precursor; that stretch reads ENDDDLDFS. Position 571 is a valine amide (V571). A compositionally biased stretch (basic and acidic residues) spans 572-584; sequence GKRENDDDLEFSK. Residues 575-583 constitute a propeptide that is removed on maturation; the sequence is ENDDDLEFS. Valine amide is present on V590. A propeptide spanning residues 594 to 602 is cleaved from the precursor; the sequence is ENDPLLDFS. Position 609 is a valine amide (V609). A compositionally biased stretch (basic and acidic residues) spans 610–622; sequence GKRENDDDLDFSK. Positions 613 to 621 are excised as a propeptide; sequence ENDDDLDFS. V628 is modified (valine amide). The propeptide occupies 632-640; the sequence is ENDPLIDFS. Position 647 is a valine amide (V647). The propeptide occupies 651–659; sequence ESDGDFELS. V666 carries the post-translational modification Valine amide. Positions 670–677 are excised as a propeptide; sequence DVDGPGLS. V684 carries the post-translational modification Valine amide. Positions 688–695 are excised as a propeptide; that stretch reads EDYDIDFA. V702 is subject to Valine amide. The propeptide occupies 706–714; the sequence is GNEDEFEMS. V721 carries the valine amide modification. Residues 724–757 constitute a propeptide that is removed on maturation; sequence RNFEELDQDFLRHMHDILDKRIPQFVSLPSLTAA. Residue V764 is modified to Valine amide. Residues 768–812 constitute a propeptide that is removed on maturation; the sequence is SDAAFLETLRHLRDYVGGQDEQNVSEFSYQHPYPSDLNDVGLIQQ. Position 819 is a valine amide (V819). Positions 823–862 are excised as a propeptide; sequence GGDVDDINTTYRLGDFVSQPMSFVEEPSWLCRQLNAFGIS.

In terms of tissue distribution, expressed abundantly in the abdominal ganglion, much less in the pedal and cerebral ganglia, and rarely in the buccal and pleural ganglia.

Its subcellular location is the secreted. Functionally, PRQFV-amide may act as a modulator within the feeding system as well as in other systems of Aplysia. The polypeptide is Protein PRQFV-amide (Aplysia californica (California sea hare)).